The sequence spans 212 residues: Large ribosomal subunit protein uL3 (212 aa).

An N5-methylglutamine modification is found at glutamine 153.

It belongs to the universal ribosomal protein uL3 family. In terms of assembly, part of the 50S ribosomal subunit. Forms a cluster with proteins L14 and L19. Post-translationally, methylated by PrmB.

One of the primary rRNA binding proteins, it binds directly near the 3'-end of the 23S rRNA, where it nucleates assembly of the 50S subunit. This is Large ribosomal subunit protein uL3 from Dechloromonas aromatica (strain RCB).